A 396-amino-acid polypeptide reads, in one-letter code: (S)-8-oxocitronellyl enol synthase ISY2 (396 aa).

NADP(+) contacts are provided by residues 38–40 (TGL), 66–67 (RR), 84–85 (DV), 108–109 (TW), Q146, Y182, I209, and 216–218 (SMM). The active site involves Y182.

The protein belongs to the short-chain dehydrogenases/reductases (SDR) family.

It carries out the reaction (S)-8-oxocitronellyl enol + NADP(+) = (6E)-8-oxogeranial + NADPH + H(+). It catalyses the reaction (S)-8-oxocitronellyl enol + NAD(+) = (6E)-8-oxogeranial + NADH + H(+). Functionally, iridoid synthase that catalyzes the first step in generation of the iridoid ring scaffold using the linear monoterpene (6E)-8-oxogeranial as substrate. Iridoids comprise a large family of distinctive bicyclic monoterpenes that possess a wide range of pharmacological activities, including anticancer, anti-inflammatory, antifungal and antibacterial activities. Catalyzes the conversion of the linear monoterpene (6E)-8-oxogeranial to (S)-8-oxocitronellyl enol, a precursor of nepetalactones, which are metabolites that are both insect-repellent and have euphoric effect in cats. The protein is (S)-8-oxocitronellyl enol synthase ISY2 of Nepeta racemosa (Catmint).